The chain runs to 255 residues: Pyrroloquinoline-quinone synthase (255 aa).

This sequence belongs to the PqqC family.

It catalyses the reaction 6-(2-amino-2-carboxyethyl)-7,8-dioxo-1,2,3,4,7,8-hexahydroquinoline-2,4-dicarboxylate + 3 O2 = pyrroloquinoline quinone + 2 H2O2 + 2 H2O + H(+). The protein operates within cofactor biosynthesis; pyrroloquinoline quinone biosynthesis. In terms of biological role, ring cyclization and eight-electron oxidation of 3a-(2-amino-2-carboxyethyl)-4,5-dioxo-4,5,6,7,8,9-hexahydroquinoline-7,9-dicarboxylic-acid to PQQ. This is Pyrroloquinoline-quinone synthase from Cereibacter sphaeroides (strain ATCC 17025 / ATH 2.4.3) (Rhodobacter sphaeroides).